The following is a 311-amino-acid chain: Probable cysteine synthase (311 aa).

The residue at position 45 (K45) is an N6-(pyridoxal phosphate)lysine. Pyridoxal 5'-phosphate is bound by residues N75, G182 to T186, and S270.

Belongs to the cysteine synthase/cystathionine beta-synthase family. Pyridoxal 5'-phosphate is required as a cofactor.

It carries out the reaction O-acetyl-L-serine + hydrogen sulfide = L-cysteine + acetate. Its pathway is amino-acid biosynthesis; L-cysteine biosynthesis; L-cysteine from L-serine: step 2/2. This is Probable cysteine synthase (ytkP) from Bacillus subtilis (strain 168).